A 219-amino-acid chain; its full sequence is uncharacterized protein (219 aa).

A run of 5 helical transmembrane segments spans residues 14–34 (LVYS…FGVL), 37–57 (TLGF…AGAS), 123–143 (FLLG…ALGV), 155–175 (VYSA…LPNL), and 189–209 (VALA…AALA).

It belongs to the AzlC family.

It localises to the cell membrane. This is an uncharacterized protein from Archaeoglobus fulgidus (strain ATCC 49558 / DSM 4304 / JCM 9628 / NBRC 100126 / VC-16).